The primary structure comprises 362 residues: tRNA-specific 2-thiouridylase MnmA (362 aa).

Residues 9 to 16 (GMSGGVDS) and Met35 contribute to the ATP site. The segment at 95 to 97 (NPD) is interaction with target base in tRNA. Cys100 serves as the catalytic Nucleophile. Cys100 and Cys197 are oxidised to a cystine. Gly124 is a binding site for ATP. The interval 147–149 (KDQ) is interaction with tRNA. Cys197 serves as the catalytic Cysteine persulfide intermediate. The tract at residues 309-310 (RY) is interaction with tRNA.

The protein belongs to the MnmA/TRMU family.

Its subcellular location is the cytoplasm. The enzyme catalyses S-sulfanyl-L-cysteinyl-[protein] + uridine(34) in tRNA + AH2 + ATP = 2-thiouridine(34) in tRNA + L-cysteinyl-[protein] + A + AMP + diphosphate + H(+). In terms of biological role, catalyzes the 2-thiolation of uridine at the wobble position (U34) of tRNA, leading to the formation of s(2)U34. The polypeptide is tRNA-specific 2-thiouridylase MnmA (Cupriavidus pinatubonensis (strain JMP 134 / LMG 1197) (Cupriavidus necator (strain JMP 134))).